A 331-amino-acid polypeptide reads, in one-letter code: Adenosine deaminase (331 aa).

Zn(2+)-binding residues include histidine 12 and histidine 14. Positions 14, 16, and 170 each coordinate substrate. Residue histidine 197 participates in Zn(2+) binding. Residue glutamate 200 is the Proton donor of the active site. Aspartate 278 contributes to the Zn(2+) binding site.

This sequence belongs to the metallo-dependent hydrolases superfamily. Adenosine and AMP deaminases family. Adenosine deaminase subfamily. The cofactor is Zn(2+).

The enzyme catalyses adenosine + H2O + H(+) = inosine + NH4(+). The catalysed reaction is 2'-deoxyadenosine + H2O + H(+) = 2'-deoxyinosine + NH4(+). Catalyzes the hydrolytic deamination of adenosine and 2-deoxyadenosine. The polypeptide is Adenosine deaminase (Vibrio vulnificus (strain YJ016)).